The primary structure comprises 313 residues: Probable cell division protein WhiA (313 aa).

A DNA-binding region (H-T-H motif) is located at residues 277–311 (SLKEVAAQVPDGPISKSGVNHRFQKIREIAKQLKE).

The protein belongs to the WhiA family.

In terms of biological role, involved in cell division and chromosome segregation. The sequence is that of Probable cell division protein WhiA from Lactobacillus johnsonii (strain CNCM I-12250 / La1 / NCC 533).